The chain runs to 105 residues: Endoribonuclease MazF1 (105 aa).

The protein belongs to the PemK/MazF family. As to quaternary structure, forms a complex with cognate antitoxin MazE1.

In terms of biological role, toxic component of a type II toxin-antitoxin (TA) system. Acts as an endoribonuclease on single-strand RNA, cleaving between the first and second bases in the sequence UCGCU. Neutralized by coexpression with cognate antitoxin MazE1. The polypeptide is Endoribonuclease MazF1 (mazF1) (Mycobacterium bovis (strain ATCC BAA-935 / AF2122/97)).